The following is a 707-amino-acid chain: Choline transporter-like protein 4 (707 aa).

Residues 1–32 are Cytoplasmic-facing; that stretch reads MGRKQNENEAHGNSAKYDPSFRGPIKNRGCTD. A helical transmembrane segment spans residues 33–53; that stretch reads IICCVLFLIFILGYIIVGLVA. Over 54-227 the chain is Extracellular; that stretch reads WVYGDPRQVL…KIFEDFAQSW (174 aa). N-linked (GlcNAc...) asparagine glycosylation is found at Asn67, Asn185, Asn195, and Asn196. A helical membrane pass occupies residues 228–248; it reads YWILVALGVALALSLLFILLL. The Cytoplasmic segment spans residues 249-250; it reads RL. Residues 251 to 271 form a helical membrane-spanning segment; the sequence is VAAPLVLLLIVGVLAVLAYGI. Residues 272-307 lie on the Extracellular side of the membrane; it reads YHCWQQYQVFRDKGASITQLGFTTNFSAYQSVKETW. A glycan (N-linked (GlcNAc...) asparagine) is linked at Asn296. Residues 308–328 traverse the membrane as a helical segment; sequence LAALIVLAVLEGILLLMLIFL. The Cytoplasmic segment spans residues 329–356; the sequence is RQRIRIAIALLKEASRAVGQMMSTMFYP. A helical membrane pass occupies residues 357–377; sequence LVTFVLLVICIGYWAVTALYL. Residues 378–452 lie on the Extracellular side of the membrane; that stretch reads ATSGQPQYIY…GVLGLFWTVN (75 aa). Asn391, Asn403, and Asn413 each carry an N-linked (GlcNAc...) asparagine glycan. A helical transmembrane segment spans residues 453–473; sequence WVLALGQCVLAGAFASFYWAF. Over 474–498 the chain is Cytoplasmic; the sequence is HKPRDIPTFPLSSAFIRTLRYHTGS. A helical membrane pass occupies residues 499-519; sequence LAFGALILSLVQIARVILEYI. At 520–557 the chain is on the extracellular side; sequence DHKLRGSQNPVARCIICCFKCCLWCLEKFIKFLNRNAY. The helical transmembrane segment at 558-578 threads the bilayer; the sequence is IMIAIYGKNFCVSAKNAFMLL. At 579-594 the chain is on the cytoplasmic side; sequence MRNVLRVVVLDKVTDL. Residues 595 to 615 traverse the membrane as a helical segment; that stretch reads LLFFGKLLVVGGVGVLSFFFF. Over 616–635 the chain is Extracellular; it reads SGRIKGLGKDFENPNLNYYW. The helical transmembrane segment at 636-656 threads the bilayer; sequence LPIMTSIMGAYVIASGFFSVF. At 657–707 the chain is on the cytoplasmic side; sequence GMCVDTLFLCFLEDLERNDGSQERPYYMPKALLKILGKKNEAPTGGKTRKK.

The protein belongs to the CTL (choline transporter-like) family. In terms of processing, N-glycosylated; N-glycosylation of Asn-67 and Asn-391 is required for a proper thiamine pyrophosphate uptake. As to expression, expressed in colon and cecum.

The protein resides in the membrane. Its subcellular location is the apical cell membrane. It carries out the reaction choline(out) + n H(+)(in) = choline(in) + n H(+)(out). The catalysed reaction is thiamine diphosphate(out) = thiamine diphosphate(in). Choline transporter that plays a role in the choline-acetylcholine system and is required to the efferent innervation of hair cells in the olivocochlear bundle for the maintenance of physiological function of outer hair cells and the protection of hair cells from acoustic injury. Also described as a thiamine pyrophosphate transporter in colon, may mediate the absorption of microbiota-generated thiamine pyrophosphate and contribute to host thiamine (vitamin B1) homeostasis. This chain is Choline transporter-like protein 4, found in Mus musculus (Mouse).